Consider the following 158-residue polypeptide: Transcriptional repressor NrdR (158 aa).

Residues 3–34 (CPFCGSLDTQVIDSRANEAGDAIRRRRRCAAC) fold into a zinc finger. One can recognise an ATP-cone domain in the interval 49–139 (PQIVKTNGTR…VYKSFKDPDD (91 aa)).

It belongs to the NrdR family. Requires Zn(2+) as cofactor.

In terms of biological role, negatively regulates transcription of bacterial ribonucleotide reductase nrd genes and operons by binding to NrdR-boxes. This Thiobacillus denitrificans (strain ATCC 25259 / T1) protein is Transcriptional repressor NrdR.